The following is a 116-amino-acid chain: Vesicle-associated membrane protein 2 (116 aa).

The tract at residues 1-28 (MSATAATVPPAAPAGEGGPPAPPPNLTS) is disordered. Residue S2 is modified to N-acetylserine. The Cytoplasmic portion of the chain corresponds to 2–94 (SATAATVPPA…KRKYWWKNLK (93 aa)). Residues 31-91 (RLQQTQAQVD…AKLKRKYWWK (61 aa)) form the v-SNARE coiled-coil homology domain. Residues 92–116 (NLKMMIILGVICAIILIIIIVYFST) are required for interaction with SEPT8. A helical; Anchor for type IV membrane protein membrane pass occupies residues 95-114 (MMIILGVICAIILIIIIVYF). Residues 115–116 (ST) are Vesicular-facing.

This sequence belongs to the synaptobrevin family. As to quaternary structure, part of the SNARE core complex containing SNAP25, VAMP2 and STX1A; this complex constitutes the basic catalytic machinery of the complex neurotransmitter release apparatus. Recruited to the SNARE complex following binding of the SNARE complex component STX1A to STXBP1. This complex binds to CPLX1. Interacts with VAPA and VAPB. Interacts (via N-terminus) with KCNB1 (via N-terminus and C-terminus); stimulates the channel inactivation rate of KCNB1. Interacts with POPDC1 and STX4. Interacts with WDFY2, PRKCZ and PRKCI. Forms a complex with WDFY2 and PRKCZ. Interacts with SEPT8; the interaction inhibits interaction of VAMP2 with SYP. Interacts with SYP; the interaction is inhibited by interaction with SEPT8. Interacts with PICALM. Interacts with alpha-synuclein/SNCA. Interacts with STX3 isoform 3B. Post-translationally, phosphorylated by PRKCZ in vitro and this phosphorylation is increased in the presence of WDFY2. (Microbial infection) Targeted and hydrolyzed by C.botulinum neurotoxin type B (BoNT/B, botB); 20 hours after treatment of spinal cord cells almost all the protein has been digested. BoNT/B hydrolyzes the 76-Gln-|-Phe-77 bond and inhibits neurotransmitter release. In terms of processing, (Microbial infection) Targeted and hydrolyzed by C.tetani toxin (tetX); 20 hours after treatment of spinal cord cells almost all the protein has been digested. Tetanus toxin hydrolyzes the 76-Gln-|-Phe-77 bond and inhibits neurotransmitter release. Expressed in the outer plexiform layer of the retina (at protein level).

The protein localises to the cytoplasmic vesicle. It is found in the secretory vesicle. It localises to the synaptic vesicle membrane. Its subcellular location is the cell membrane. In terms of biological role, involved in the targeting and/or fusion of transport vesicles to their target membrane. Major SNARE protein of synaptic vesicles which mediates fusion of synaptic vesicles to release neurotransmitters. Essential for fast vesicular exocytosis and activity-dependent neurotransmitter release as well as fast endocytosis that mediates rapid reuse of synaptic vesicles. Modulates the gating characteristics of the delayed rectifier voltage-dependent potassium channel KCNB1. In Mus musculus (Mouse), this protein is Vesicle-associated membrane protein 2 (Vamp2).